The chain runs to 101 residues: NAD(P)H-quinone oxidoreductase subunit 4L, chloroplastic (101 aa).

Transmembrane regions (helical) follow at residues 2–22 (MLEY…YGLI), 32–52 (MCLE…SDLF), and 61–81 (IFSI…PAIV).

This sequence belongs to the complex I subunit 4L family. NDH is composed of at least 16 different subunits, 5 of which are encoded in the nucleus.

Its subcellular location is the plastid. The protein resides in the chloroplast thylakoid membrane. It carries out the reaction a plastoquinone + NADH + (n+1) H(+)(in) = a plastoquinol + NAD(+) + n H(+)(out). The enzyme catalyses a plastoquinone + NADPH + (n+1) H(+)(in) = a plastoquinol + NADP(+) + n H(+)(out). Its function is as follows. NDH shuttles electrons from NAD(P)H:plastoquinone, via FMN and iron-sulfur (Fe-S) centers, to quinones in the photosynthetic chain and possibly in a chloroplast respiratory chain. The immediate electron acceptor for the enzyme in this species is believed to be plastoquinone. Couples the redox reaction to proton translocation, and thus conserves the redox energy in a proton gradient. The protein is NAD(P)H-quinone oxidoreductase subunit 4L, chloroplastic of Acorus calamus var. americanus (American sweet flag).